Here is a 446-residue protein sequence, read N- to C-terminus: Nuclear envelope morphology protein 1 (446 aa).

The segment at valine 53–lysine 80 is disordered. Over residues glutamine 56–asparagine 75 the composition is skewed to basic and acidic residues. A helical membrane pass occupies residues isoleucine 87–leucine 103. Residues histidine 132–leucine 168 are disordered. A compositionally biased stretch (polar residues) spans glycine 139–aspartate 156. Residues asparagine 247–methionine 424 enclose the FCP1 homology domain.

The protein belongs to the Dullard family. Component of the NEM1-SPO7 complex.

The protein resides in the endoplasmic reticulum membrane. Its subcellular location is the nucleus membrane. It catalyses the reaction O-phospho-L-seryl-[protein] + H2O = L-seryl-[protein] + phosphate. The catalysed reaction is O-phospho-L-threonyl-[protein] + H2O = L-threonyl-[protein] + phosphate. Functionally, catalytic component of the NEM1-SPO7 complex which acts as a phosphatase and dephosphorylates the phosphatidic acid phosphohydrolase PAH1. Essential for the formation of a spherical nucleus and meiotic division. The NEM1-SPOo7 protein phosphatase is required for efficient mitophagy under prolonged respiration, as well as for reticulophagy and pexophagy. The chain is Nuclear envelope morphology protein 1 (NEM1) from Saccharomyces cerevisiae (strain ATCC 204508 / S288c) (Baker's yeast).